A 397-amino-acid chain; its full sequence is Proteinase-activated receptor 2 (397 aa).

A signal peptide spans 1–25 (MRSPSAAWLLGAAILLAASLSCSGT). Residues 26 to 36 (IQGTNRSSKGR) constitute a propeptide, removed for receptor activation. An N-linked (GlcNAc...) asparagine glycan is attached at Asn30. Topologically, residues 37–71 (SLIGKVDGTSHVTGKGVTVETVFSVDEFSASVLTG) are extracellular. A helical transmembrane segment spans residues 72–101 (KLTTVFLPIVYTIVFVVGLPSNGMALWVFL). Over 102 to 108 (FRTKKKH) the chain is Cytoplasmic. The chain crosses the membrane as a helical span at residues 109–137 (PAVIYMANLALADLLSVIWFPLKIAYHIH). Residues 138–149 (GNNWIYGEALCN) lie on the Extracellular side of the membrane. Cysteines 148 and 226 form a disulfide. A helical membrane pass occupies residues 150-177 (VLIGFFYGNMYCSILFMTCLSVQRYWVI). The Cytoplasmic segment spans residues 178-183 (VNPMGH). A helical membrane pass occupies residues 184-211 (SRKKANIAIGISLAIWLLILLVTIPLYV). At 212–235 (VKQTIFIPALNITTCHDVLPEQLL) the chain is on the extracellular side. Residue Asn222 is glycosylated (N-linked (GlcNAc...) asparagine). Residues 236–269 (VGDMFNYFLSLAIGVFLFPAFLTASAYVLMIRML) form a helical membrane-spanning segment. Residues 270–277 (RSSAMDEN) lie on the Cytoplasmic side of the membrane. The helical transmembrane segment at 278–317 (SEKKRKRAIKLIVTVLAMYLICFTPSNLLLVVHYFLIKSQ) threads the bilayer. At 318 to 323 (GQSHVY) the chain is on the extracellular side. A helical membrane pass occupies residues 324–347 (ALYIVALCLSTLNSCIDPFVYYFV). Topologically, residues 348–397 (SHDFRDHAKNALLCRSVRTVKQMQVSLTSKKHSRKSSSYSSSSTTVKTSY) are cytoplasmic. Cys361 is lipidated: S-palmitoyl cysteine. The disordered stretch occupies residues 373–397 (SLTSKKHSRKSSSYSSSSTTVKTSY). Residues 383–397 (SSSYSSSSTTVKTSY) show a composition bias toward low complexity.

Belongs to the G-protein coupled receptor 1 family. Interacts with TLR4, COPS5 and TMED2. Interacts with GNAQ, GNA11, GNA12, GNA13 and GNA14. Post-translationally, a proteolytic cleavage generates a new N-terminus that functions as a tethered ligand. Activating serine proteases include trypsin, mast cell tryptase, coagulation factors VII and Xa, myeloblastin/PRTN3 and membrane-type serine protease 1/ST14. Subsequent cleavage by serine proteases, including neutrophil elastase and cathepsin G, leads to receptor deactivation. At least in part, implicated proteases are also shown to activate the receptor; the glycosylation status of the receptor is thought to contribute to the difference. In addition to conventional trypsin-like proteases activated by other proteases and glycosidases derived from bacteria, fungi and insects. Activated by serine protease allergens such as dust mite Der p3 and Der p9 and mold Pen c13. Activated by P.gingivalis arginine-specific (trypsin-like) cysteine proteinases called gingipains. Activated by S.griseus exogenous chitinase. Activated by A.alternata aspartate protease; the cleavage generates non-conventional processed forms. Proteolytically cleaved by coagulation factor Xa (F10); cleavage results in activation of F2RL1-dependent signaling. In terms of processing, N-glycosylated and sialylated. Multiple phosphorylated on serine and threonine residues in the cytoplasmic region upon receptor activation; required for receptor desensitization and recruitment of beta-arrestin. Post-translationally, monoubiquitinated by CBL at the plasma membrane and in early endosomes; not required for receptor endocytosis but for translocation to late endosomes or lysosomes. Deubiquitination involves STAMBP and USP8; required for lysosomal trafficking and receptor degradation. In terms of tissue distribution, widely expressed in tissues with especially high levels in pancreas, liver, kidney, small intestine, and colon. Moderate expression is detected in many organs, but none in brain or skeletal muscle. Expressed in endothelial cells.

The protein localises to the cell membrane. With respect to regulation, activated upon interaction by mucunain, a cowhage (Mucuna pruriens) plant cysteine proteinase. Its function is as follows. Receptor for trypsin and trypsin-like enzymes coupled to G proteins. Its function is mediated through the activation of several signaling pathways including phospholipase C (PLC), intracellular calcium, mitogen-activated protein kinase (MAPK), I-kappaB kinase/NF-kappaB and Rho. Can also be transactivated by cleaved F2R/PAR1. Involved in modulation of inflammatory responses and regulation of innate and adaptive immunity, and acts as a sensor for proteolytic enzymes generated during infection. Generally is promoting inflammation. Can signal synergistically with TLR4 and probably TLR2 in inflammatory responses and modulates TLR3 signaling. Has a protective role in establishing the endothelial barrier; the activity involves coagulation factor X. Regulates endothelial cell barrier integrity during neutrophil extravasation, probably following proteolytic cleavage by PRTN3. Proposed to have a bronchoprotective role in airway epithelium, but also shown to compromise the airway epithelial barrier by interrupting E-cadherin adhesion. Involved in the regulation of vascular tone; activation results in hypotension presumably mediated by vasodilation. Associates with a subset of G proteins alpha subunits such as GNAQ, GNA11, GNA14, GNA12 and GNA13, but probably not with G(o)-alpha, G(i) subunit alpha-1 and G(i) subunit alpha-2. However, according to PubMed:21627585 can signal through G(i) subunit alpha. Believed to be a class B receptor which internalizes as a complex with arrestin and traffic with it to endosomal vesicles, presumably as desensitized receptor, for extended periods of time. Mediates inhibition of TNF-alpha stimulated JNK phosphorylation via coupling to GNAQ and GNA11; the function involves dissociation of RIPK1 and TRADD from TNFR1. Mediates phosphorylation of nuclear factor NF-kappa-B RELA subunit at 'Ser-536'; the function involves IKBKB and is predominantly independent of G proteins. Involved in cellular migration. Involved in cytoskeletal rearrangement and chemotaxis through beta-arrestin-promoted scaffolds; the function is independent of GNAQ and GNA11 and involves promotion of cofilin dephosphorylation and actin filament severing. Induces redistribution of COPS5 from the plasma membrane to the cytosol and activation of the JNK cascade is mediated by COPS5. Involved in the recruitment of leukocytes to the sites of inflammation and is the major PAR receptor capable of modulating eosinophil function such as pro-inflammatory cytokine secretion, superoxide production and degranulation. During inflammation promotes dendritic cell maturation, trafficking to the lymph nodes and subsequent T-cell activation. Involved in antimicrobial response of innate immune cells; activation enhances phagocytosis of Gram-positive and killing of Gram-negative bacteria. Acts synergistically with interferon-gamma in enhancing antiviral responses. Implicated in a number of acute and chronic inflammatory diseases such as of the joints, lungs, brain, gastrointestinal tract, periodontium, skin, and vascular systems, and in autoimmune disorders. Probably mediates activation of pro-inflammatory and pro-fibrotic responses in fibroblasts, triggered by coagulation factor Xa (F10). Mediates activation of barrier protective signaling responses in endothelial cells, triggered by coagulation factor Xa (F10). This chain is Proteinase-activated receptor 2 (F2RL1), found in Homo sapiens (Human).